The following is a 444-amino-acid chain: Phosphoglucosamine mutase (444 aa).

Ser103 acts as the Phosphoserine intermediate in catalysis. Residues Ser103, Asp241, Asp243, and Asp245 each contribute to the Mg(2+) site. Phosphoserine is present on Ser103.

The protein belongs to the phosphohexose mutase family. The cofactor is Mg(2+). Activated by phosphorylation.

It carries out the reaction alpha-D-glucosamine 1-phosphate = D-glucosamine 6-phosphate. Its function is as follows. Catalyzes the conversion of glucosamine-6-phosphate to glucosamine-1-phosphate. This is Phosphoglucosamine mutase from Deinococcus radiodurans (strain ATCC 13939 / DSM 20539 / JCM 16871 / CCUG 27074 / LMG 4051 / NBRC 15346 / NCIMB 9279 / VKM B-1422 / R1).